We begin with the raw amino-acid sequence, 96 residues long: Small, acid-soluble spore protein gamma-type (96 aa).

A compositionally biased stretch (polar residues) spans methionine 1–alanine 15. Residues methionine 1–glutamine 96 form a disordered region. Over residues glutamine 16–glutamine 27 the composition is skewed to low complexity. Polar residues predominate over residues glycine 28–threonine 41. 2 repeats span residues glycine 28 to glutamine 52 and glycine 61 to serine 87. Low complexity-rich tracts occupy residues asparagine 42 to asparagine 57 and asparagine 76 to glutamine 86.

This sequence belongs to the gamma-type SASP family.

In terms of biological role, SASP are proteins degraded in the first minutes of spore germination and provide amino acids for both new protein synthesis and metabolism. These proteins may be involved in dormant spore's high resistance to UV light. This chain is Small, acid-soluble spore protein gamma-type, found in Laceyella sacchari (Thermoactinomyces thalpophilus).